A 403-amino-acid polypeptide reads, in one-letter code: tRNA(Met) cytidine acetate ligase (403 aa).

ATP-binding positions include 7–20 (VVEY…HAYH), Gly101, Asn164, and 189–190 (RI).

This sequence belongs to the TmcAL family.

It localises to the cytoplasm. The catalysed reaction is cytidine(34) in elongator tRNA(Met) + acetate + ATP = N(4)-acetylcytidine(34) in elongator tRNA(Met) + AMP + diphosphate. Catalyzes the formation of N(4)-acetylcytidine (ac(4)C) at the wobble position of elongator tRNA(Met), using acetate and ATP as substrates. First activates an acetate ion to form acetyladenylate (Ac-AMP) and then transfers the acetyl group to tRNA to form ac(4)C34. This Lysinibacillus sphaericus (strain C3-41) protein is tRNA(Met) cytidine acetate ligase.